We begin with the raw amino-acid sequence, 172 residues long: Shikimate kinase (172 aa).

Position 8–15 (Gly-8–Thr-15) interacts with ATP.

This sequence belongs to the shikimate kinase family.

The protein resides in the cytoplasm. The enzyme catalyses shikimate + ATP = 3-phosphoshikimate + ADP + H(+). It functions in the pathway metabolic intermediate biosynthesis; chorismate biosynthesis; chorismate from D-erythrose 4-phosphate and phosphoenolpyruvate: step 5/7. The chain is Shikimate kinase from Oleidesulfovibrio alaskensis (strain ATCC BAA-1058 / DSM 17464 / G20) (Desulfovibrio alaskensis).